Reading from the N-terminus, the 207-residue chain is MSVTYVASCKLPTPFGVFDMHGFQEVGTQKEHIALTLGDIGDGASVLARTHSECLTGDALFSMRCDCGYQLDEALRSIAAEGRGILLYLRQEGRGIGLLNKIRAYNLQDQGADTVEANEQLGFAADMRDYSMCKPMLYHLGISRIRLMTNNPRKVDSLTKLGIEVVERVPLEVGRNPHNRNYLATKAGKLGHLLTTHQDDDYVVAAK.

A GTP-binding site is contributed by 49 to 53 (RTHSE). Zn(2+)-binding residues include Cys-54, Cys-65, and Cys-67. Residues Gln-70, 92–94 (EGR), and Thr-114 contribute to the GTP site. The active-site Proton acceptor is Asp-126. Arg-128 serves as the catalytic Nucleophile. GTP contacts are provided by Thr-149 and Lys-154.

The protein belongs to the GTP cyclohydrolase II family. The cofactor is Zn(2+).

It catalyses the reaction GTP + 4 H2O = 2,5-diamino-6-hydroxy-4-(5-phosphoribosylamino)-pyrimidine + formate + 2 phosphate + 3 H(+). Its pathway is cofactor biosynthesis; riboflavin biosynthesis; 5-amino-6-(D-ribitylamino)uracil from GTP: step 1/4. Functionally, catalyzes the conversion of GTP to 2,5-diamino-6-ribosylamino-4(3H)-pyrimidinone 5'-phosphate (DARP), formate and pyrophosphate. The chain is GTP cyclohydrolase-2 from Hahella chejuensis (strain KCTC 2396).